Consider the following 470-residue polypeptide: Aspartyl aminopeptidase (470 aa).

His92 serves as a coordination point for Zn(2+). Substrate is bound at residue His166. Asp263 contributes to the Zn(2+) binding site. Residue Glu299 coordinates substrate. Residues Glu300 and Asp343 each contribute to the Zn(2+) site. The substrate site is built by Asp343, His346, Lys371, and Tyr378. His437 is a Zn(2+) binding site.

Belongs to the peptidase M18 family. In terms of assembly, tetrahedron-shaped homododecamer built from six homodimers. Zn(2+) serves as cofactor. Expressed in various cell types and tissues including the pharynx, neurons, body wall muscle, intestine and vulva.

The protein resides in the cytoplasm. It is found in the cytosol. The enzyme catalyses Release of an N-terminal aspartate or glutamate from a peptide, with a preference for aspartate.. Its function is as follows. Aminopeptidase with specificity towards an acidic amino acid at the N-terminus. Plays a role in membrane trafficking and is specifically involved in the recycling and degradation of endocytic cargo. The sequence is that of Aspartyl aminopeptidase from Caenorhabditis elegans.